A 155-amino-acid chain; its full sequence is Ribonuclease H (155 aa).

In terms of domain architecture, RNase H type-1 spans 4–145; it reads DISKVVIYTD…ADKLAVQGRQ (142 aa). 4 residues coordinate Mg(2+): Asp-13, Glu-51, Asp-73, and Asp-137.

This sequence belongs to the RNase H family. As to quaternary structure, monomer. It depends on Mg(2+) as a cofactor.

It localises to the cytoplasm. The enzyme catalyses Endonucleolytic cleavage to 5'-phosphomonoester.. In terms of biological role, endonuclease that specifically degrades the RNA of RNA-DNA hybrids. This chain is Ribonuclease H, found in Rickettsia bellii (strain RML369-C).